A 355-amino-acid chain; its full sequence is DNA-directed RNA polymerase subunit alpha (355 aa).

Positions 1–248 are alpha N-terminal domain (alpha-NTD); that stretch reads MYYDDGIPVF…EQLQPFISSD (248 aa). An alpha C-terminal domain (alpha-CTD) region spans residues 267-355; that stretch reads YDPILLRKVD…ELARQHTDED (89 aa).

It belongs to the RNA polymerase alpha chain family. As to quaternary structure, homodimer. The RNAP catalytic core consists of 2 alpha, 1 beta, 1 beta' and 1 omega subunit. When a sigma factor is associated with the core the holoenzyme is formed, which can initiate transcription.

The enzyme catalyses RNA(n) + a ribonucleoside 5'-triphosphate = RNA(n+1) + diphosphate. Its function is as follows. DNA-dependent RNA polymerase catalyzes the transcription of DNA into RNA using the four ribonucleoside triphosphates as substrates. This Wolbachia sp. subsp. Brugia malayi (strain TRS) protein is DNA-directed RNA polymerase subunit alpha.